Consider the following 443-residue polypeptide: Protein king tubby (443 aa).

2 disordered regions span residues 57–85 (TNGSPGGITPVAVNTSRNHSNNMRSLSTI) and 98–189 (HELE…ESEG). Residues 68 to 85 (AVNTSRNHSNNMRSLSTI) show a composition bias toward polar residues. Positions 113–128 (QHQQSASHSANSTQSQ) are enriched in low complexity. The residue at position 136 (Ser136) is a Phosphoserine. Residues 148-160 (NRNVAAAAPVRPA) show a composition bias toward low complexity. Residues 177-186 (NGTGNGTGGE) are compositionally biased toward gly residues.

This sequence belongs to the TUB family.

The protein resides in the cytoplasm. Its subcellular location is the nucleus. It localises to the cell projection. The protein localises to the cilium membrane. It is found in the rhabdomere. This Drosophila yakuba (Fruit fly) protein is Protein king tubby.